We begin with the raw amino-acid sequence, 180 residues long: ATP synthase subunit b, plastid (180 aa).

The chain crosses the membrane as a helical span at residues 27–49 (LVTTLINIAVVLSLLIVFGKGFL).

Belongs to the ATPase B chain family. In terms of assembly, F-type ATPases have 2 components, F(1) - the catalytic core - and F(0) - the membrane proton channel. F(1) has five subunits: alpha(3), beta(3), gamma(1), delta(1), epsilon(1). F(0) has four main subunits: a(1), b(1), b'(1) and c(10-14). The alpha and beta chains form an alternating ring which encloses part of the gamma chain. F(1) is attached to F(0) by a central stalk formed by the gamma and epsilon chains, while a peripheral stalk is formed by the delta, b and b' chains.

The protein resides in the plastid membrane. Its function is as follows. F(1)F(0) ATP synthase produces ATP from ADP in the presence of a proton or sodium gradient. F-type ATPases consist of two structural domains, F(1) containing the extramembraneous catalytic core and F(0) containing the membrane proton channel, linked together by a central stalk and a peripheral stalk. During catalysis, ATP synthesis in the catalytic domain of F(1) is coupled via a rotary mechanism of the central stalk subunits to proton translocation. Functionally, component of the F(0) channel, it forms part of the peripheral stalk, linking F(1) to F(0). The sequence is that of ATP synthase subunit b, plastid from Cuscuta gronovii (Common dodder).